The following is a 61-amino-acid chain: uncharacterized protein (61 aa).

Positions 34–61 (TDVEDIDRLISMLDDLEAKYERFKKDWE) form a coiled coil.

This is an uncharacterized protein from Bacillus subtilis (strain 168).